The primary structure comprises 591 residues: Myelin expression factor 2 (591 aa).

The tract at residues 1-92 (MADADKSEAA…GEKKGPNRNR (92 aa)) is disordered. Over residues 22–36 (EPRRDTHPGEPEKPP) the composition is skewed to basic and acidic residues. A Glycyl lysine isopeptide (Lys-Gly) (interchain with G-Cter in SUMO2) cross-link involves residue K44. 2 stretches are compositionally biased toward basic and acidic residues: residues 45 to 63 (MEND…EKST) and 74 to 87 (YSKD…EKKG). RRM domains lie at 91-169 (NRVF…EDPD) and 224-301 (STIF…MDDK). R397 and R417 each carry omega-N-methylarginine. S422 is modified (phosphoserine). In terms of domain architecture, RRM 3 spans 514-590 (NQIFVRNLPF…REIDVRLDRN (77 aa)).

Monomer. Highly expressed in the brain.

It localises to the nucleus. Transcriptional repressor of the myelin basic protein gene (MBP). Binds to the proximal MB1 element 5'-TTGTCC-3' of the MBP promoter. Its binding to MB1 and function are inhibited by PURA. This Mus musculus (Mouse) protein is Myelin expression factor 2 (Myef2).